Reading from the N-terminus, the 129-residue chain is Bacteriohemerythrin (129 aa).

7 residues coordinate Fe cation: H19, H59, E63, H78, H82, H119, and D124.

It belongs to the hemerythrin family. In terms of assembly, monomer.

Oxygen-binding protein. May be involved in a storage mechanism or for delivery to oxygen-requiring enzymes. The oxygen-binding site contains two iron atoms. This chain is Bacteriohemerythrin, found in Clostridium acetobutylicum (strain ATCC 824 / DSM 792 / JCM 1419 / IAM 19013 / LMG 5710 / NBRC 13948 / NRRL B-527 / VKM B-1787 / 2291 / W).